Here is a 169-residue protein sequence, read N- to C-terminus: S-ribosylhomocysteine lyase (169 aa).

Fe cation is bound by residues histidine 54, histidine 58, and cysteine 128.

Belongs to the LuxS family. As to quaternary structure, homodimer. Fe cation serves as cofactor.

It catalyses the reaction S-(5-deoxy-D-ribos-5-yl)-L-homocysteine = (S)-4,5-dihydroxypentane-2,3-dione + L-homocysteine. Involved in the synthesis of autoinducer 2 (AI-2) which is secreted by bacteria and is used to communicate both the cell density and the metabolic potential of the environment. The regulation of gene expression in response to changes in cell density is called quorum sensing. Catalyzes the transformation of S-ribosylhomocysteine (RHC) to homocysteine (HC) and 4,5-dihydroxy-2,3-pentadione (DPD). In Shewanella loihica (strain ATCC BAA-1088 / PV-4), this protein is S-ribosylhomocysteine lyase.